Reading from the N-terminus, the 264-residue chain is 3-methyl-2-oxobutanoate hydroxymethyltransferase (264 aa).

Asp45 and Asp84 together coordinate Mg(2+). 3-methyl-2-oxobutanoate contacts are provided by residues 45–46, Asp84, and Lys112; that span reads DS. Glu114 is a Mg(2+) binding site. Glu181 functions as the Proton acceptor in the catalytic mechanism.

The protein belongs to the PanB family. In terms of assembly, homodecamer; pentamer of dimers. Requires Mg(2+) as cofactor.

Its subcellular location is the cytoplasm. It carries out the reaction 3-methyl-2-oxobutanoate + (6R)-5,10-methylene-5,6,7,8-tetrahydrofolate + H2O = 2-dehydropantoate + (6S)-5,6,7,8-tetrahydrofolate. It functions in the pathway cofactor biosynthesis; (R)-pantothenate biosynthesis; (R)-pantoate from 3-methyl-2-oxobutanoate: step 1/2. In terms of biological role, catalyzes the reversible reaction in which hydroxymethyl group from 5,10-methylenetetrahydrofolate is transferred onto alpha-ketoisovalerate to form ketopantoate. The chain is 3-methyl-2-oxobutanoate hydroxymethyltransferase from Shigella flexneri serotype 5b (strain 8401).